A 272-amino-acid chain; its full sequence is Glucosyl-3-phosphoglycerate/mannosyl-3-phosphoglycerate phosphatase (272 aa).

Catalysis depends on D8, which acts as the Nucleophile. Mg(2+) contacts are provided by D8, D10, and D214.

It belongs to the HAD-like hydrolase superfamily. MPGP family. Monomer. It depends on Co(2+) as a cofactor. The cofactor is Mg(2+). Requires Ni(2+) as cofactor.

It catalyses the reaction (2R)-2-O-(alpha-D-glucopyranosyl)-3-phospho-glycerate + H2O = (2R)-2-O-(alpha-D-glucopyranosyl)-glycerate + phosphate. The catalysed reaction is 2-O-(alpha-D-mannosyl)-3-phosphoglycerate + H2O = (2R)-2-O-(alpha-D-mannosyl)-glycerate + phosphate. Its function is as follows. Involved in the biosynthesis of glucosylglycerate. Catalyzes the dephosphorylation of glucosyl-3-phosphoglycerate (GPG) and mannosyl-3-phosphoglycerate (MPG) to glucosylglycerate (GG) and mannosylglycerate (MG), respectively. This is Glucosyl-3-phosphoglycerate/mannosyl-3-phosphoglycerate phosphatase from Methanococcoides burtonii (strain DSM 6242 / NBRC 107633 / OCM 468 / ACE-M).